Here is a 148-residue protein sequence, read N- to C-terminus: SsrA-binding protein (148 aa).

It belongs to the SmpB family.

It is found in the cytoplasm. In terms of biological role, required for rescue of stalled ribosomes mediated by trans-translation. Binds to transfer-messenger RNA (tmRNA), required for stable association of tmRNA with ribosomes. tmRNA and SmpB together mimic tRNA shape, replacing the anticodon stem-loop with SmpB. tmRNA is encoded by the ssrA gene; the 2 termini fold to resemble tRNA(Ala) and it encodes a 'tag peptide', a short internal open reading frame. During trans-translation Ala-aminoacylated tmRNA acts like a tRNA, entering the A-site of stalled ribosomes, displacing the stalled mRNA. The ribosome then switches to translate the ORF on the tmRNA; the nascent peptide is terminated with the 'tag peptide' encoded by the tmRNA and targeted for degradation. The ribosome is freed to recommence translation, which seems to be the essential function of trans-translation. This Pseudothermotoga lettingae (strain ATCC BAA-301 / DSM 14385 / NBRC 107922 / TMO) (Thermotoga lettingae) protein is SsrA-binding protein.